A 234-amino-acid chain; its full sequence is Nuclear transcription factor Y subunit C-1 (234 aa).

Disordered stretches follow at residues 1–20 (MDTN…PPPP) and 205–234 (SVWQ…DGQG). Over residues 7-20 (QPPPSAAGIPPPPP) the composition is skewed to pro residues. Positions 209–219 (TSTGTGDDVSY) are enriched in low complexity. Over residues 220 to 234 (GSGGSSGQGNLDGQG) the composition is skewed to gly residues.

Belongs to the NFYC/HAP5 subunit family. In terms of assembly, heterotrimeric transcription factor composed of three components, NF-YA, NF-YB and NF-YC. NF-YB and NF-YC must interact and dimerize for NF-YA association and DNA binding. As to expression, ubiquitous. Present in etiolated seedlings.

It localises to the nucleus. Stimulates the transcription of various genes by recognizing and binding to a CCAAT motif in promoters. The protein is Nuclear transcription factor Y subunit C-1 (NFYC1) of Arabidopsis thaliana (Mouse-ear cress).